The primary structure comprises 115 residues: Replication initiation control protein YabA (115 aa).

Zn(2+) is bound by residues His90, Cys92, Cys106, and Cys109.

It belongs to the YabA family. In terms of assembly, homotetramer. Interacts with both DnaA and DnaN, acting as a bridge between these two proteins. Zn(2+) is required as a cofactor.

It localises to the cytoplasm. It is found in the nucleoid. Its function is as follows. Involved in control of chromosome replication initiation. Inhibits the cooperative binding of DnaA to the oriC region, thus negatively regulating initiation of chromosome replication. Inhibits the ability of DnaA-ATP to form a helix on DNA; does not disassemble preformed DnaA-DNA helices. Decreases the residence time of DnaA on the chromosome at its binding sites (oriC, replication forks and promoter-binding sites). Tethers DnaA to the replication machinery via the DNA polymerase beta sliding clamp subunit (dnaN). Associates with oriC and other DnaA targets on the chromosome in a DnaA-dependent manner. This chain is Replication initiation control protein YabA, found in Staphylococcus aureus (strain bovine RF122 / ET3-1).